The following is a 171-amino-acid chain: Tetratricopeptide repeat protein 9C (171 aa).

TPR repeat units lie at residues 8-41, 72-107, and 108-141; these read AQLY…LRGL, TDCY…QPEN, and AKAL…QPKD.

This sequence belongs to the TTC9 family.

In Rattus norvegicus (Rat), this protein is Tetratricopeptide repeat protein 9C (Ttc9c).